The primary structure comprises 400 residues: 3-phenylpropionate/cinnamic acid dioxygenase ferredoxin--NAD(+) reductase component (400 aa).

Residue Thr-5–Asp-36 participates in FAD binding. Ser-146 to Glu-174 provides a ligand contact to NAD(+).

The protein belongs to the bacterial ring-hydroxylating dioxygenase ferredoxin reductase family. In terms of assembly, this dioxygenase system consists of four proteins: the two subunits of the hydroxylase component (HcaE and HcaF), a ferredoxin (HcaC) and a ferredoxin reductase (HcaD). FAD is required as a cofactor.

The enzyme catalyses 2 reduced [2Fe-2S]-[ferredoxin] + NAD(+) + H(+) = 2 oxidized [2Fe-2S]-[ferredoxin] + NADH. The protein operates within aromatic compound metabolism; 3-phenylpropanoate degradation. In terms of biological role, part of the multicomponent 3-phenylpropionate dioxygenase, that converts 3-phenylpropionic acid (PP) and cinnamic acid (CI) into 3-phenylpropionate-dihydrodiol (PP-dihydrodiol) and cinnamic acid-dihydrodiol (CI-dihydrodiol), respectively. This chain is 3-phenylpropionate/cinnamic acid dioxygenase ferredoxin--NAD(+) reductase component, found in Escherichia coli (strain K12 / MC4100 / BW2952).